The primary structure comprises 193 residues: ATP-dependent Clp protease proteolytic subunit 1 (193 aa).

The active-site Nucleophile is S98. Residue H123 is part of the active site.

This sequence belongs to the peptidase S14 family. Fourteen ClpP subunits assemble into 2 heptameric rings which stack back to back to give a disk-like structure with a central cavity, resembling the structure of eukaryotic proteasomes.

The protein localises to the cytoplasm. The catalysed reaction is Hydrolysis of proteins to small peptides in the presence of ATP and magnesium. alpha-casein is the usual test substrate. In the absence of ATP, only oligopeptides shorter than five residues are hydrolyzed (such as succinyl-Leu-Tyr-|-NHMec, and Leu-Tyr-Leu-|-Tyr-Trp, in which cleavage of the -Tyr-|-Leu- and -Tyr-|-Trp bonds also occurs).. Its function is as follows. Cleaves peptides in various proteins in a process that requires ATP hydrolysis. Has a chymotrypsin-like activity. Plays a major role in the degradation of misfolded proteins. The protein is ATP-dependent Clp protease proteolytic subunit 1 of Bacillus anthracis.